The following is a 411-amino-acid chain: 2,3-bisphosphoglycerate-independent phosphoglycerate mutase 1 (411 aa).

The protein belongs to the BPG-independent phosphoglycerate mutase family. A-PGAM subfamily. As to quaternary structure, homotetramer. The cofactor is Mg(2+).

The enzyme catalyses (2R)-2-phosphoglycerate = (2R)-3-phosphoglycerate. It functions in the pathway carbohydrate degradation; glycolysis; pyruvate from D-glyceraldehyde 3-phosphate: step 3/5. Its activity is regulated as follows. Inhibited to approximately 20% by EDTA. Its function is as follows. Catalyzes the interconversion of 2-phosphoglycerate and 3-phosphoglycerate. The sequence is that of 2,3-bisphosphoglycerate-independent phosphoglycerate mutase 1 (apgM1) from Methanocaldococcus jannaschii (strain ATCC 43067 / DSM 2661 / JAL-1 / JCM 10045 / NBRC 100440) (Methanococcus jannaschii).